Here is a 1503-residue protein sequence, read N- to C-terminus: Dynein axonemal assembly factor 1 homolog (1503 aa).

LRR repeat units follow at residues 34-56, 57-78, 79-100, 101-122, 125-146, and 150-171; these read RLND…EEYT, ELKC…EKLG, KLKC…DPCR, ELDT…GTNI, VLNT…SDLI, and TLSV…KIFE. An LRRCT domain is found at 185-223; it reads PVVSRLPQYRKTLILACKELTYLDSRPVFPRDRACAEAW. 4 disordered regions span residues 249–280, 305–328, 956–1033, and 1295–1315; these read SINC…DDTC, EQPI…TSSQ, DSGD…DHDE, and STNN…STSE. Acidic residues predominate over residues 973 to 985; that stretch reads TESEDYDTAEDEY. The span at 1014 to 1031 shows a compositional bias: basic and acidic residues; it reads QKQDKPDTVEEVGKKNDH. The segment covering 1303-1314 has biased composition (low complexity); sequence TKKTLPTKTSTS.

It belongs to the DNAAF1 family.

Its subcellular location is the cell projection. It localises to the cilium. Cilium-specific protein required for cilia structures. The chain is Dynein axonemal assembly factor 1 homolog (dtr) from Drosophila erecta (Fruit fly).